The sequence spans 120 residues: Prefoldin subunit beta (120 aa).

It belongs to the prefoldin subunit beta family. As to quaternary structure, heterohexamer of two alpha and four beta subunits.

The protein resides in the cytoplasm. In terms of biological role, molecular chaperone capable of stabilizing a range of proteins. Seems to fulfill an ATP-independent, HSP70-like function in archaeal de novo protein folding. In Methanospirillum hungatei JF-1 (strain ATCC 27890 / DSM 864 / NBRC 100397 / JF-1), this protein is Prefoldin subunit beta.